A 315-amino-acid polypeptide reads, in one-letter code: Type II restriction enzyme AvaI (315 aa).

The catalysed reaction is Endonucleolytic cleavage of DNA to give specific double-stranded fragments with terminal 5'-phosphates.. In terms of biological role, a P subtype restriction enzyme that recognizes the double-stranded sequence 5'-CYCGRG-3' and cleaves after C-1. The sequence is that of Type II restriction enzyme AvaI from Anabaena variabilis.